Consider the following 938-residue polypeptide: Glutamate receptor ionotropic, NMDA 1 (938 aa).

Positions 1 to 18 (MSTMRLLTLALLFSCSVA) are cleaved as a signal peptide. Topologically, residues 19-559 (RAACDPKIVN…TLDSFMQPFQ (541 aa)) are extracellular. 10 N-linked (GlcNAc...) asparagine glycosylation sites follow: Asn61, Asn203, Asn239, Asn276, Asn300, Asn350, Asn368, Asn440, Asn471, and Asn491. Cys79 and Cys308 form a disulfide bridge. Cystine bridges form between Cys420–Cys454 and Cys436–Cys455. Positions 516, 518, and 523 each coordinate glycine. The chain crosses the membrane as a helical span at residues 560–580 (STLWLLVGLSVHVVAVMLYLL). Over 581–604 (DRFSPFGRFKVNSEEEEEDALTLS) the chain is Cytoplasmic. The interval 603–624 (LSSAMWFSWGVLLNSGIGEGAP) is pore-forming. Residues 605 to 615 (SAMWFSWGVLL) constitute an intramembrane region (discontinuously helical). Residues 616 to 627 (NSGIGEGAPRSF) lie on the Cytoplasmic side of the membrane. The helical transmembrane segment at 628–648 (SARILGMVWAGFAMIIVASYT) threads the bilayer. The Extracellular portion of the chain corresponds to 649-811 (ANLAAFLVLD…SNAPATLTFE (163 aa)). Asn674 carries an N-linked (GlcNAc...) asparagine glycan. Glycine contacts are provided by Ser688 and Asp732. Cys744 and Cys798 are joined by a disulfide. Asn771 is a glycosylation site (N-linked (GlcNAc...) asparagine). The helical transmembrane segment at 812–835 (NMAGVFMLVAGGIVAGIFLIFIEI) threads the bilayer. At 836 to 938 (AYKRHKDARR…LQLCSRHRES (103 aa)) the chain is on the cytoplasmic side. 4 positions are modified to phosphoserine; by PKC: Ser889, Ser890, Ser896, and Ser897. Residues 889–938 (SSFKRRRSSKDTSTGGGRGALQNQKDTVLPRRAIEREEGQLQLCSRHRES) form a disordered region. Residues 916-927 (VLPRRAIEREEG) show a composition bias toward basic and acidic residues.

The protein belongs to the glutamate-gated ion channel (TC 1.A.10.1) family. NR1/GRIN1 subfamily. In terms of assembly, heterotetramer; the NMDAR subunits are modular and harbor tiered domains that function in concert to regulate opening and closing of the cation-selective ion channel pore. Forms heterotetrameric channels composed of two GluN1/zeta subunits (GRIN1), and two identical GluN2/epsilon subunits (GRIN2A, GRIN2B, GRIN2C or GRIN2D) or GluN3 subunits (GRIN3A or GRIN3B) (in vitro). Can also form heterotetrameric channels that contain at least two GluN1 subunits and at least two different GluN2 subunits (or a combination of one GluN2 and one GluN3 subunits) (in vitro). In vivo, the subunit composition may vary in function of the expression levels of the different subunits. Found in a complex with GRIN2A or GRIN2B, GRIN3A and PPP2CB. Found in a complex with GRIN2A or GRIN2B and GRIN3B. Interacts with SNX27 (via PDZ domain); the interaction is required for recycling to the plasma membrane when endocytosed and prevent degradation in lysosomes. Interacts with DLG4 and MPDZ. Interacts with LRFN1 and LRFN2. Interacts with MYZAP. Found in a complex with DLG4 and PRR7. Found in a complex with GRIN2B and PRR7. Interacts with PRR7; the interaction is reduced following NMDA receptor activity. NMDA is probably regulated by C-terminal phosphorylation of an isoform of GRIN1 by PKC. Dephosphorylated on Ser-897 probably by protein phosphatase 2A (PPP2CB). Its phosphorylated state is influenced by the formation of the NMDAR-PPP2CB complex and the NMDAR channel activity.

It localises to the cell membrane. The protein resides in the postsynaptic cell membrane. Its subcellular location is the postsynaptic density membrane. The protein localises to the synaptic cell membrane. It catalyses the reaction Ca(2+)(in) = Ca(2+)(out). The enzyme catalyses Na(+)(in) = Na(+)(out). The catalysed reaction is K(+)(in) = K(+)(out). Its activity is regulated as follows. NMDA glutamate receptor activity is inhbited by Mg2(+) in a voltage-dependent manner; Mg2(+)-induced blockade occurs only at negative potentials and decreases with membrane depolarization. 7-chlorokynurenate (50 uM) or Zn2(+) (100 uM) partially inhibit the NMDA glutamate receptor activity, while acide 2-amino-5-phosphonovalerique(100 uM) almost completely blocked the NMDA glutamate receptor activity. Dizocilpine (1 uM) results in long lasting and almost complete block of the NMDA glutamate receptor activity. In terms of biological role, component of N-methyl-D-aspartate (NMDA) receptors (NMDARs) that function as heterotetrameric, ligand-gated cation channels with high calcium permeability and voltage-dependent block by Mg(2+). NMDARs participate in synaptic plasticity for learning and memory formation by contributing to the long-term potentiation (LTP). Channel activation requires binding of the neurotransmitter L-glutamate to the GluN2 subunit, glycine or D-serine binding to the GluN1 subunit, plus membrane depolarization to eliminate channel inhibition by Mg(2+). NMDARs mediate simultaneously the potasium efflux and the influx of calcium and sodium. Each GluN2 or GluN3 subunit confers differential attributes to channel properties, including activation, deactivation and desensitization kinetics, pH sensitivity, Ca2(+) permeability, and binding to allosteric modulators. The polypeptide is Glutamate receptor ionotropic, NMDA 1 (Homo sapiens (Human)).